Here is a 60-residue protein sequence, read N- to C-terminus: Serum basic protease inhibitor (60 aa).

In terms of domain architecture, BPTI/Kunitz inhibitor spans 7-57; sequence CLEPPYTGPCKAAMIRYFYNAKAGFCETFVYGGCRAKSNNFKSAEDCMRTC. 3 disulfides stabilise this stretch: cysteine 7–cysteine 57, cysteine 16–cysteine 40, and cysteine 32–cysteine 53.

The protein resides in the secreted. Functionally, this inhibitor has activity very similar to that of the basic protease inhibitor from bovine tissues. This is Serum basic protease inhibitor from Bos taurus (Bovine).